The following is a 451-amino-acid chain: CBL-interacting protein kinase 22 (451 aa).

The region spanning 26 to 301 (YELGRVLGQG…IGEIFDHPWL (276 aa)) is the Protein kinase domain. Residues 32 to 40 (LGQGASSKV) and Lys-55 each bind ATP. The active-site Proton acceptor is the Asp-165. Residues 183-216 (DFGLSAFADADQHLGATDGLAATHCGSPAYVAPE) form an activation loop region. Positions 330-356 (ELEQAMELNAFDIIGFASGCDLSGLIG) constitute an NAF domain. The segment at 361–389 (RVRFVLPGGDSKSVLDKVEKLGREEGLVV) is PPI.

Belongs to the protein kinase superfamily. CAMK Ser/Thr protein kinase family. SNF1 subfamily. The cofactor is Mn(2+).

It carries out the reaction L-seryl-[protein] + ATP = O-phospho-L-seryl-[protein] + ADP + H(+). The enzyme catalyses L-threonyl-[protein] + ATP = O-phospho-L-threonyl-[protein] + ADP + H(+). In terms of biological role, CIPK serine-threonine protein kinases interact with CBL proteins. Binding of a CBL protein to the regulatory NAF domain of CIPK protein lead to the activation of the kinase in a calcium-dependent manner. The protein is CBL-interacting protein kinase 22 (CIPK22) of Oryza sativa subsp. japonica (Rice).